Reading from the N-terminus, the 249-residue chain is 5'-nucleotidase SurE (249 aa).

Positions 8, 9, 39, and 91 each coordinate a divalent metal cation.

Belongs to the SurE nucleotidase family. Requires a divalent metal cation as cofactor.

It localises to the cytoplasm. It catalyses the reaction a ribonucleoside 5'-phosphate + H2O = a ribonucleoside + phosphate. Nucleotidase that shows phosphatase activity on nucleoside 5'-monophosphates. The sequence is that of 5'-nucleotidase SurE from Pseudomonas syringae pv. syringae (strain B728a).